The following is a 127-amino-acid chain: Small ribosomal subunit protein uS12 (127 aa).

3-methylthioaspartic acid is present on aspartate 89. The tract at residues 101-127 (ALDTSGVAGRTQRRSKYGAKRPKEAKK) is disordered. The span at 111–127 (TQRRSKYGAKRPKEAKK) shows a compositional bias: basic residues.

It belongs to the universal ribosomal protein uS12 family. As to quaternary structure, part of the 30S ribosomal subunit. Contacts proteins S8 and S17. May interact with IF1 in the 30S initiation complex.

In terms of biological role, with S4 and S5 plays an important role in translational accuracy. Its function is as follows. Interacts with and stabilizes bases of the 16S rRNA that are involved in tRNA selection in the A site and with the mRNA backbone. Located at the interface of the 30S and 50S subunits, it traverses the body of the 30S subunit contacting proteins on the other side and probably holding the rRNA structure together. The combined cluster of proteins S8, S12 and S17 appears to hold together the shoulder and platform of the 30S subunit. This chain is Small ribosomal subunit protein uS12, found in Flavobacterium johnsoniae (strain ATCC 17061 / DSM 2064 / JCM 8514 / BCRC 14874 / CCUG 350202 / NBRC 14942 / NCIMB 11054 / UW101) (Cytophaga johnsonae).